A 295-amino-acid chain; its full sequence is Protoheme IX farnesyltransferase (295 aa).

The next 9 membrane-spanning stretches (helical) occupy residues 8–28 (VTKPGIIFGNLISVIGGFLLA), 35–55 (YPLFLSTLLGVSLVVASGCVF), 74–94 (VLVKGLIDPKVSLIYASVLGI), 98–118 (LLLYVAANALAMMLAVIGFVI), 132–152 (VYGTLIGSLSGAAPPVIGYCA), 162–182 (LILLLIFSLWQMPHSYAIAIF), 208–228 (ITLYILAFMVATLMLTLSGYA), 233–253 (LVVAAAVSVWWLGMALRGYKA), and 264–284 (FVFSIIAITSLSVMMSVDFNV).

The protein belongs to the UbiA prenyltransferase family. Protoheme IX farnesyltransferase subfamily.

Its subcellular location is the cell inner membrane. The enzyme catalyses heme b + (2E,6E)-farnesyl diphosphate + H2O = Fe(II)-heme o + diphosphate. Its pathway is porphyrin-containing compound metabolism; heme O biosynthesis; heme O from protoheme: step 1/1. Functionally, converts heme B (protoheme IX) to heme O by substitution of the vinyl group on carbon 2 of heme B porphyrin ring with a hydroxyethyl farnesyl side group. This Yersinia pseudotuberculosis serotype O:1b (strain IP 31758) protein is Protoheme IX farnesyltransferase.